The following is a 209-amino-acid chain: 3-demethoxyubiquinol 3-hydroxylase (209 aa).

Fe cation contacts are provided by glutamate 58, glutamate 88, histidine 91, glutamate 140, glutamate 172, and histidine 175.

Belongs to the COQ7 family. Fe cation is required as a cofactor.

It is found in the cell membrane. The catalysed reaction is a 5-methoxy-2-methyl-3-(all-trans-polyprenyl)benzene-1,4-diol + AH2 + O2 = a 3-demethylubiquinol + A + H2O. The protein operates within cofactor biosynthesis; ubiquinone biosynthesis. Its function is as follows. Catalyzes the hydroxylation of 2-nonaprenyl-3-methyl-6-methoxy-1,4-benzoquinol during ubiquinone biosynthesis. The sequence is that of 3-demethoxyubiquinol 3-hydroxylase from Polaromonas naphthalenivorans (strain CJ2).